The following is a 257-amino-acid chain: Zinc import ATP-binding protein ZnuC (257 aa).

The ABC transporter domain occupies 5 to 220; it reads ITLKNVAVNF…PEFIAMFGHH (216 aa). 37–44 contacts ATP; it reads GPNGAGKS.

Belongs to the ABC transporter superfamily. Zinc importer (TC 3.A.1.15.5) family. In terms of assembly, the complex is composed of two ATP-binding proteins (ZnuC), two transmembrane proteins (ZnuB) and a solute-binding protein (ZnuA).

It localises to the cell inner membrane. It catalyses the reaction Zn(2+)(out) + ATP(in) + H2O(in) = Zn(2+)(in) + ADP(in) + phosphate(in) + H(+)(in). Functionally, part of the ABC transporter complex ZnuABC involved in zinc import. Responsible for energy coupling to the transport system. This is Zinc import ATP-binding protein ZnuC from Photorhabdus laumondii subsp. laumondii (strain DSM 15139 / CIP 105565 / TT01) (Photorhabdus luminescens subsp. laumondii).